A 576-amino-acid chain; its full sequence is Arginine--tRNA ligase (576 aa).

Positions 126-136 match the 'HIGH' region motif; it reads ANPTGPMHIGH.

It belongs to the class-I aminoacyl-tRNA synthetase family. In terms of assembly, monomer.

The protein resides in the cytoplasm. The enzyme catalyses tRNA(Arg) + L-arginine + ATP = L-arginyl-tRNA(Arg) + AMP + diphosphate. The sequence is that of Arginine--tRNA ligase from Rickettsia rickettsii (strain Iowa).